The following is a 365-amino-acid chain: Pyridoxal reductase, chloroplastic (365 aa).

A chloroplast-targeting transit peptide spans 1–15; it reads MALTLSTTKTFTNIN. The active-site Proton donor is the tyrosine 94.

It belongs to the aldo/keto reductase family. As to quaternary structure, monomer. Expressed in cotyledons, embryos, flowers, shoots, roots and seeds.

It is found in the plastid. The protein localises to the chloroplast. It catalyses the reaction pyridoxine + NADP(+) = pyridoxal + NADPH + H(+). It functions in the pathway cofactor degradation; B6 vitamer degradation; pyridoxal from pyridoxine (dehydrogenase route): step 1/1. Its function is as follows. Catalyzes the reduction of pyridoxal (PL) with NADPH and oxidation of pyridoxine (PN) with NADP(+). Involved in the PLP salvage pathway. In Arabidopsis thaliana (Mouse-ear cress), this protein is Pyridoxal reductase, chloroplastic (PLR1).